Here is a 254-residue protein sequence, read N- to C-terminus: Dihydroorotate dehydrogenase B (NAD(+)), electron transfer subunit (254 aa).

The FAD-binding FR-type domain maps to 1–99 (MLQTEMKVIQ…LGPLGKGFDI (99 aa)). FAD-binding positions include 50 to 53 (RPIS), 67 to 69 (LYR), and 74 to 75 (GT). [2Fe-2S] cluster contacts are provided by Cys-218, Cys-223, Cys-226, and Cys-241.

Belongs to the PyrK family. In terms of assembly, heterotetramer of 2 PyrK and 2 PyrD type B subunits. [2Fe-2S] cluster is required as a cofactor. The cofactor is FAD.

The protein operates within pyrimidine metabolism; UMP biosynthesis via de novo pathway; orotate from (S)-dihydroorotate (NAD(+) route): step 1/1. Responsible for channeling the electrons from the oxidation of dihydroorotate from the FMN redox center in the PyrD type B subunit to the ultimate electron acceptor NAD(+). This chain is Dihydroorotate dehydrogenase B (NAD(+)), electron transfer subunit, found in Listeria monocytogenes serovar 1/2a (strain ATCC BAA-679 / EGD-e).